The following is a 534-amino-acid chain: Nitrate/nitrite transporter NrtP (534 aa).

12 helical membrane-spanning segments follow: residues 19–39 (WFAF…ATTI), 52–72 (TIGL…GMLL), 79–99 (LTYS…ATAQ), 109–129 (LLMG…AEWF), 150–170 (AFSA…PGAF), 195–215 (AAIA…YFSV), 240–260 (DFWF…VLAW), 266–286 (NFLN…LYLF), 382–404 (WTMV…VAGT), 409–431 (IAVL…TFAI), 445–465 (GNVG…LLLL), and 485–505 (GFFQ…AFFL).

Belongs to the major facilitator superfamily. Nitrate/nitrite porter (TC 2.A.1.8) family.

It is found in the cell inner membrane. In terms of biological role, high-efficiency transport system for both nitrate and nitrite. The chain is Nitrate/nitrite transporter NrtP from Picosynechococcus sp. (strain ATCC 27264 / PCC 7002 / PR-6) (Agmenellum quadruplicatum).